A 455-amino-acid chain; its full sequence is Pup--protein ligase (455 aa).

Glu10 contributes to the Mg(2+) binding site. Arg55 lines the ATP pocket. Residue Tyr57 coordinates Mg(2+). Asp59 acts as the Proton acceptor in catalysis. Glu65 provides a ligand contact to Mg(2+). ATP-binding residues include Thr68 and Trp422.

It belongs to the Pup ligase/Pup deamidase family. Pup-conjugating enzyme subfamily.

It catalyses the reaction ATP + [prokaryotic ubiquitin-like protein]-L-glutamate + [protein]-L-lysine = ADP + phosphate + N(6)-([prokaryotic ubiquitin-like protein]-gamma-L-glutamyl)-[protein]-L-lysine.. It functions in the pathway protein degradation; proteasomal Pup-dependent pathway. Its pathway is protein modification; protein pupylation. In terms of biological role, catalyzes the covalent attachment of the prokaryotic ubiquitin-like protein modifier Pup to the proteasomal substrate proteins, thereby targeting them for proteasomal degradation. This tagging system is termed pupylation. The ligation reaction involves the side-chain carboxylate of the C-terminal glutamate of Pup and the side-chain amino group of a substrate lysine. This chain is Pup--protein ligase, found in Sanguibacter keddieii (strain ATCC 51767 / DSM 10542 / NCFB 3025 / ST-74).